Here is a 119-residue protein sequence, read N- to C-terminus: Ig heavy chain V region X44 (119 aa).

The 117-residue stretch at Glu-1–Ser-117 folds into the Ig-like domain.

This is Ig heavy chain V region X44 from Mus musculus (Mouse).